The sequence spans 209 residues: Uridine kinase (209 aa).

12 to 19 contributes to the ATP binding site; it reads GGTGSGKS.

Belongs to the uridine kinase family.

It is found in the cytoplasm. It carries out the reaction uridine + ATP = UMP + ADP + H(+). The catalysed reaction is cytidine + ATP = CMP + ADP + H(+). It functions in the pathway pyrimidine metabolism; CTP biosynthesis via salvage pathway; CTP from cytidine: step 1/3. The protein operates within pyrimidine metabolism; UMP biosynthesis via salvage pathway; UMP from uridine: step 1/1. The protein is Uridine kinase of Clostridium tetani (strain Massachusetts / E88).